Consider the following 248-residue polypeptide: UPF0246 protein lp_0089 (248 aa).

This sequence belongs to the UPF0246 family.

This chain is UPF0246 protein lp_0089, found in Lactiplantibacillus plantarum (strain ATCC BAA-793 / NCIMB 8826 / WCFS1) (Lactobacillus plantarum).